We begin with the raw amino-acid sequence, 120 residues long: Ribonuclease P protein component (120 aa).

Belongs to the RnpA family. As to quaternary structure, consists of a catalytic RNA component (M1 or rnpB) and a protein subunit.

The enzyme catalyses Endonucleolytic cleavage of RNA, removing 5'-extranucleotides from tRNA precursor.. Functionally, RNaseP catalyzes the removal of the 5'-leader sequence from pre-tRNA to produce the mature 5'-terminus. It can also cleave other RNA substrates such as 4.5S RNA. The protein component plays an auxiliary but essential role in vivo by binding to the 5'-leader sequence and broadening the substrate specificity of the ribozyme. The protein is Ribonuclease P protein component of Rickettsia bellii (strain RML369-C).